The chain runs to 265 residues: Serine protease 1 (265 aa).

The first 21 residues, 1-21, serve as a signal peptide directing secretion; sequence MKLFVFLALAVAAATAVPAPA. Positions 22–35 are excised as a propeptide; it reads QKLTPTPIKDIQGR. The region spanning 36–262 is the Peptidase S1 domain; it reads ITNGYPAYEG…YLDWIRDNTG (227 aa). A disulfide bridge links C63 with C79. Active-site charge relay system residues include H78 and D123. Cystine bridges form between C189-C201 and C211-C239. S215 acts as the Charge relay system in catalysis.

The protein belongs to the peptidase S1 family. As to expression, abundantly expressed in the larval gut.

Major function may be to aid in digestion. The polypeptide is Serine protease 1 (Drosophila melanogaster (Fruit fly)).